The following is a 315-amino-acid chain: Rhomboid-related protein 4 (315 aa).

Topologically, residues 1–21 (MQRRSRGINTGLILLLSQIFH) are cytoplasmic. A helical transmembrane segment spans residues 22–42 (VGINNIPPVTLATLALNIWFF). The Extracellular segment spans residues 43 to 106 (LNPQKPLYSS…RRLGSRWFAY (64 aa)). The chain crosses the membrane as a helical span at residues 107–127 (VITAFSVLTGVVYLLLQFAVA). Residues 128-138 (EFMDEPDFKRS) are Cytoplasmic-facing. A helical membrane pass occupies residues 139 to 157 (CAVGFSGVLFALKVLNNHY). The active-site Nucleophile is S144. Over 158–180 (CPGGFVNILGFPVPNRFACWVEL) the chain is Extracellular. Residues 181–201 (VAIHLFSPGTSFAGHLAGILV) traverse the membrane as a helical segment. H195 is an active-site residue. The Cytoplasmic portion of the chain corresponds to 202–315 (GLMYTQGPLK…RQRLHRFDSQ (114 aa)). Positions 269–284 (SEEEQLERALQASLWD) are ubiquitin-binding domain (UBD). The tract at residues 283–315 (WDRGNTRNSPPPYGFHLSPEEMRRQRLHRFDSQ) is disordered. A compositionally biased stretch (basic and acidic residues) spans 300–315 (SPEEMRRQRLHRFDSQ). The interval 301 to 315 (PEEMRRQRLHRFDSQ) is VCP/p97-interacting motif (VIM).

Belongs to the peptidase S54 family. In terms of assembly, interacts (via C-terminal domain) with VCP. Interacts with ubiquitin and ubiquitinated proteins. Interacts with BIK and STEAP3. Expressed strongly in testis.

Its subcellular location is the endoplasmic reticulum membrane. The protein localises to the mitochondrion membrane. It catalyses the reaction Cleaves type-1 transmembrane domains using a catalytic dyad composed of serine and histidine that are contributed by different transmembrane domains.. With respect to regulation, inhibited by aprotinin. Functionally, intramembrane-cleaving serine protease that cleaves single transmembrane or multi-pass membrane proteins in the hydrophobic plane of the membrane, luminal loops and juxtamembrane regions. Involved in regulated intramembrane proteolysis and the subsequent release of functional polypeptides from their membrane anchors. Functional component of endoplasmic reticulum-associated degradation (ERAD) for misfolded membrane proteins. Required for the degradation process of some specific misfolded endoplasmic reticulum (ER) luminal proteins. Participates in the transfer of misfolded proteins from the ER to the cytosol, where they are destroyed by the proteasome in a ubiquitin-dependent manner. Functions in BIK, MPZ, PKD1, PTCRA, RHO, STEAP3 and TRAC processing. Involved in the regulation of exosomal secretion; inhibits the TSAP6-mediated secretion pathway. Involved in the regulation of apoptosis; modulates BIK-mediated apoptotic activity. Also plays a role in the regulation of spermatogenesis; inhibits apoptotic activity in spermatogonia. The protein is Rhomboid-related protein 4 (RHBDD1) of Homo sapiens (Human).